The following is a 425-amino-acid chain: Protein upregulated in glial subsets pugs-5 (425 aa).

Basic and acidic residues predominate over residues 355–373; sequence NNNDVEKSTQIEKKPEKQG. The tract at residues 355–407 is disordered; the sequence is NNNDVEKSTQIEKKPEKQGPEIQEEVVEMETVKDEQPPKTSAVRFKENSPRLM.

The sequence is that of Protein upregulated in glial subsets pugs-5 from Caenorhabditis elegans.